Here is a 302-residue protein sequence, read N- to C-terminus: Porphobilinogen deaminase (302 aa).

C234 is subject to S-(dipyrrolylmethanemethyl)cysteine.

This sequence belongs to the HMBS family. In terms of assembly, monomer. Requires dipyrromethane as cofactor.

The catalysed reaction is 4 porphobilinogen + H2O = hydroxymethylbilane + 4 NH4(+). The protein operates within porphyrin-containing compound metabolism; protoporphyrin-IX biosynthesis; coproporphyrinogen-III from 5-aminolevulinate: step 2/4. Its function is as follows. Tetrapolymerization of the monopyrrole PBG into the hydroxymethylbilane pre-uroporphyrinogen in several discrete steps. This Corynebacterium glutamicum (strain R) protein is Porphobilinogen deaminase.